The following is a 355-amino-acid chain: MIPRKRYGSKNTDQGVYLGLSKTQVLSPATAISSSSDSTPLPTPVALVPSPPDTMSCRDRTQEFQSACKSLQSRQNGIQTSKPALHAARQCSEFTLMARRIGKDLSNTFAKLEKLTILAKRKSLFDDKAVEIEELTYIIKQDINSLNKQIAQLQDFVRAKGSQSGRHLQTHSNTIVVSLQSKLASMSNDFKSVLEVRTENLKQQRNRREQFSRAPVSALPLAPNNLGGGPIILGAESRASRDVAIDMMDPRTSQQLQLIDEQDSYIQSRADTMQNIESTIVELGSIFQQLAHMVKEQEETIQRIDENVLGAQLDVEAAHSEILKYFQSVTSNRWLMVKIFLILIVFFIIFVVFLA.

Over 1–333 (MIPRKRYGSK…KYFQSVTSNR (333 aa)) the chain is Cytoplasmic. The IxM motif; signal for cargo packaging into COPII-coated vesicles signature appears at 245–247 (IDM). The t-SNARE coiled-coil homology domain occupies 263-325 (DSYIQSRADT…EAAHSEILKY (63 aa)). The stretch at 287–318 (FQQLAHMVKEQEETIQRIDENVLGAQLDVEAA) forms a coiled coil. The helical; Anchor for type IV membrane protein transmembrane segment at 334–354 (WLMVKIFLILIVFFIIFVVFL) threads the bilayer. Residue A355 is a topological domain, vesicular.

Belongs to the syntaxin family. Part of a ternary complex containing STX5A, NSFL1C and VCP. Part of a unique SNARE complex composed of the Golgi SNAREs GOSR1, GOSR2, YKT6 and VTI1A. Component of a SNARE complex consisting of STX5, YKT6, GOSR1 and BET1L. Interacts with BET1L. Interacts with BET1. Interacts with COG4. Interacts with GM130/GOLGA2. Interacts (via IxM motif) with SEC24C and SEC24D; mediates STX5 packaging into COPII-coated vesicles. Interacts with VLDLR; this interaction mediates VLDLR translocation from the endoplasmic reticulum to the plasma membrane.

The protein resides in the endoplasmic reticulum-Golgi intermediate compartment membrane. The protein localises to the golgi apparatus membrane. In terms of biological role, mediates endoplasmic reticulum to Golgi transport. Together with p115/USO1 and GM130/GOLGA2, involved in vesicle tethering and fusion at the cis-Golgi membrane to maintain the stacked and inter-connected structure of the Golgi apparatus. Its function is as follows. Required for Golgi to endoplasmic reticulum retrogade transport, and for intra-Golgi transport. The polypeptide is Syntaxin-5 (Stx5) (Mus musculus (Mouse)).